A 732-amino-acid chain; its full sequence is E3 ubiquitin-protein ligase DCST1 (732 aa).

At 1-46 (MAFLSSTLHSLGIFEKISRIKEVLKNRLLDLTKRRDQAREQQRKRP) the chain is on the cytoplasmic side. A helical membrane pass occupies residues 47–67 (HTIIQGLLLWSLPVSWIRFLW). Residues 68-76 (RQPGEFPVT) are Extracellular-facing. A helical membrane pass occupies residues 77–97 (AFLLGAGTGGLLAIGLFQLLV). The Cytoplasmic segment spans residues 98 to 107 (NPMNIYEEQK). A helical membrane pass occupies residues 108–128 (VVALYCLASLGAIGWGTSPHI). Residues 129 to 394 (RCASLLLVPK…VRDYVRQQET (266 aa)) are Extracellular-facing. N-linked (GlcNAc...) asparagine glycosylation is found at asparagine 184, asparagine 217, asparagine 346, and asparagine 374. The helical transmembrane segment at 395-415 (YLQWAMGLLHVLLSCTFLLVF) threads the bilayer. Over 416–489 (HSAFSYMDHY…RYVIRELLET (74 aa)) the chain is Cytoplasmic. The helical transmembrane segment at 490–510 (LPIVLLLLVLCAIDWALYSVF) threads the bilayer. Over 511-576 (DTIRQHSFVQ…PQPISLNARD (66 aa)) the chain is Extracellular. N-linked (GlcNAc...) asparagine glycosylation occurs at asparagine 551. A helical transmembrane segment spans residues 577–597 (YFKASLPTLLLVCLCLAQAFG). Over 598 to 732 (YRLRRVIAAF…DSNDDAVYGD (135 aa)) the chain is Cytoplasmic. The RING-type; degenerate zinc finger occupies 672–711 (CVVCQAMETPDSYVCPTPDCKALYCRSCWDDMQRLCPVCT).

As to quaternary structure, interacts with STAT2; the interaction results in STAT2 'Lys-48'-linked ubiquitination leading to its proteasomal degradation. Interacts with DCST2. Expressed in testis.

The protein localises to the cell membrane. Its subcellular location is the cytoplasmic vesicle. It localises to the secretory vesicle. The protein resides in the acrosome membrane. It catalyses the reaction S-ubiquitinyl-[E2 ubiquitin-conjugating enzyme]-L-cysteine + [acceptor protein]-L-lysine = [E2 ubiquitin-conjugating enzyme]-L-cysteine + N(6)-ubiquitinyl-[acceptor protein]-L-lysine.. It functions in the pathway protein modification; protein ubiquitination. Its function is as follows. E3 ubiquitin-protein ligase which mediates 'Lys-48'-linked ubiquitination of STAT2 and induces its proteasomal degradation thereby negatively regulating type-I-interferon signaling. In terms of biological role, essential sperm cell-surface protein required for sperm-egg fusion and fertilization. The sequence is that of E3 ubiquitin-protein ligase DCST1 (Dcst1) from Mus musculus (Mouse).